The primary structure comprises 99 residues: MAQGQRKFQAHKPAKSKTAAAASEKNRGPRKGGRVIAPKKARVVQQQKLKKNLEVGIRKKIEHDVVMKASSSLPKKLALLKAPAKKKGAAAATSSKTPS.

The disordered stretch occupies residues 1–36; sequence MAQGQRKFQAHKPAKSKTAAAASEKNRGPRKGGRVI.

This sequence belongs to the UPF0390 family.

May have a potential role in hypercalcemia of malignancy. This chain is Leydig cell tumor 10 kDa protein homolog (C19orf53), found in Homo sapiens (Human).